Consider the following 130-residue polypeptide: UPF0713 protein YngL (130 aa).

3 consecutive transmembrane segments (helical) span residues 4 to 25 (LSFLTFIMLILASYRLTHLIVF), 62 to 84 (MLNCYWCAGVWCAILIGLGYLFL), and 89 to 111 (IPLIFILAIAGAQAILETAVGVG).

This sequence belongs to the UPF0713 family.

Its subcellular location is the cell membrane. The protein is UPF0713 protein YngL (yngL) of Bacillus subtilis (strain 168).